Reading from the N-terminus, the 504-residue chain is uncharacterized protein (504 aa).

3 consecutive transmembrane segments (helical) span residues 146 to 166, 196 to 216, and 330 to 350; these read TSAGYAKIVGCALGFPVINIA, SSAAILITGAGAIGTALADVL, and SMALTMALLAAAVLYASVAVA. 372-492 contributes to the a nucleoside 3',5'-cyclic phosphate binding site; it reads FLNIDVPLQA…EIAYGVARTR (121 aa).

It localises to the cell membrane. This is an uncharacterized protein from Mycobacterium tuberculosis (strain CDC 1551 / Oshkosh).